Consider the following 106-residue polypeptide: Small ribosomal subunit protein uS10 (106 aa).

Belongs to the universal ribosomal protein uS10 family. As to quaternary structure, part of the 30S ribosomal subunit.

Involved in the binding of tRNA to the ribosomes. The chain is Small ribosomal subunit protein uS10 from Prochlorococcus marinus (strain MIT 9312).